A 371-amino-acid chain; its full sequence is tRNA (guanine(26)-N(2))-dimethyltransferase (371 aa).

The region spanning methionine 1–valine 370 is the Trm1 methyltransferase domain. The S-adenosyl-L-methionine site is built by arginine 36, arginine 66, aspartate 81, aspartate 107, and alanine 108. Zn(2+)-binding residues include cysteine 238, cysteine 241, cysteine 258, and cysteine 261.

The protein belongs to the class I-like SAM-binding methyltransferase superfamily. Trm1 family.

It carries out the reaction guanosine(26) in tRNA + 2 S-adenosyl-L-methionine = N(2)-dimethylguanosine(26) in tRNA + 2 S-adenosyl-L-homocysteine + 2 H(+). Dimethylates a single guanine residue at position 26 of a number of tRNAs using S-adenosyl-L-methionine as donor of the methyl groups. In Halobacterium salinarum (strain ATCC 700922 / JCM 11081 / NRC-1) (Halobacterium halobium), this protein is tRNA (guanine(26)-N(2))-dimethyltransferase.